The sequence spans 188 residues: Acyl-acyl carrier protein thioesterase ATL2, chloroplastic (188 aa).

A chloroplast-targeting transit peptide spans 1 to 47; sequence MFQATSTGAQIMHAAFPRSWRRGHVLPLRSAKIFKPLACLELRGSTG. The active site involves Asp-64.

This sequence belongs to the 4-hydroxybenzoyl-CoA thioesterase family. In terms of tissue distribution, expressed in endodermal and peridermal cells in young and mature roots, in boundaries of stem lateral organs and developing seeds.

The protein localises to the plastid. The protein resides in the chloroplast. Its function is as follows. Acyl-ACP thioesterase involved in the production of fatty acids and beta-keto fatty acids. Can produce beta-keto fatty acids of medium chain (8:0 and 10:0) and small amounts of 8:0 fatty acid when expressed in a heterologous organism (E.coli). May play a role in suberin biosynthesis. The polypeptide is Acyl-acyl carrier protein thioesterase ATL2, chloroplastic (Arabidopsis thaliana (Mouse-ear cress)).